The chain runs to 49 residues: uncharacterized protein (49 aa).

A helical transmembrane segment spans residues 31 to 48 (PDLYTIIVSYFSIFSLFF).

The protein localises to the membrane. This is an uncharacterized protein from Saccharomyces cerevisiae (strain ATCC 204508 / S288c) (Baker's yeast).